The chain runs to 146 residues: Protein phosphatase 1 regulatory subunit 14D (146 aa).

Residues 1 to 16 (MLSSSAASCTSPNPDT) show a composition bias toward polar residues. The tract at residues 1-57 (MLSSSAASCTSPNPDTDNPDKKVRWSSEKRRRASSTDSESKTHLDISKLPRSRRPSR) is disordered. 2 stretches are compositionally biased toward basic and acidic residues: residues 18-28 (NPDKKVRWSSE) and 38-48 (SESKTHLDISK). The interaction with protein phosphatase 1 stretch occupies residues 21–25 (KKVRW).

Belongs to the PP1 inhibitor family. Phosphorylated on several residues.

The protein localises to the cytoplasm. Its function is as follows. Inhibitor of PPP1CA. Has inhibitory activity only when phosphorylated, creating a molecular switch for regulating the phosphorylation status of PPP1CA substrates and smooth muscle contraction. The chain is Protein phosphatase 1 regulatory subunit 14D (Ppp1r14d) from Rattus norvegicus (Rat).